A 93-amino-acid polypeptide reads, in one-letter code: U11-ctenitoxin-Pn1a (93 aa).

A signal peptide spans 1 to 21 (MKCAVLFLSVIALVHIFVVEA). The propeptide occupies 22–34 (EEEPDSDALVPQE). 5 disulfide bridges follow: C37-C51, C44-C57, C50-C75, C59-C73, and C83-C90.

Belongs to the neurotoxin 09 (Tx3-6) family. In terms of tissue distribution, expressed by the venom gland.

Its subcellular location is the secreted. Probable neurotoxin. The chain is U11-ctenitoxin-Pn1a from Phoneutria nigriventer (Brazilian armed spider).